We begin with the raw amino-acid sequence, 64 residues long: Large ribosomal subunit protein bL35 (64 aa).

This sequence belongs to the bacterial ribosomal protein bL35 family.

The sequence is that of Large ribosomal subunit protein bL35 from Coxiella burnetii (strain RSA 493 / Nine Mile phase I).